The following is a 232-amino-acid chain: Sugar fermentation stimulation protein homolog (232 aa).

It belongs to the SfsA family.

The protein is Sugar fermentation stimulation protein homolog of Magnetococcus marinus (strain ATCC BAA-1437 / JCM 17883 / MC-1).